We begin with the raw amino-acid sequence, 414 residues long: Secernin-1 (414 aa).

N-acetylalanine is present on A2. Residue C9 is part of the active site.

It belongs to the peptidase C69 family. Secernin subfamily.

It is found in the cytoplasm. Regulates exocytosis in mast cells. Increases both the extent of secretion and the sensitivity of mast cells to stimulation with calcium. The chain is Secernin-1 (SCRN1) from Homo sapiens (Human).